Consider the following 384-residue polypeptide: Dual-specificity RNA methyltransferase RlmN (384 aa).

The Proton acceptor role is filled by E93. One can recognise a Radical SAM core domain in the interval 99–339 (EETRGTLCVS…TTIRKTRGDD (241 aa)). Residues C106 and C344 are joined by a disulfide bond. 3 residues coordinate [4Fe-4S] cluster: C113, C117, and C120. S-adenosyl-L-methionine is bound by residues 170-171 (GE), S202, 224-226 (SLH), and N301. C344 functions as the S-methylcysteine intermediate in the catalytic mechanism.

It belongs to the radical SAM superfamily. RlmN family. Requires [4Fe-4S] cluster as cofactor.

The protein localises to the cytoplasm. The enzyme catalyses adenosine(2503) in 23S rRNA + 2 reduced [2Fe-2S]-[ferredoxin] + 2 S-adenosyl-L-methionine = 2-methyladenosine(2503) in 23S rRNA + 5'-deoxyadenosine + L-methionine + 2 oxidized [2Fe-2S]-[ferredoxin] + S-adenosyl-L-homocysteine. It catalyses the reaction adenosine(37) in tRNA + 2 reduced [2Fe-2S]-[ferredoxin] + 2 S-adenosyl-L-methionine = 2-methyladenosine(37) in tRNA + 5'-deoxyadenosine + L-methionine + 2 oxidized [2Fe-2S]-[ferredoxin] + S-adenosyl-L-homocysteine. Specifically methylates position 2 of adenine 2503 in 23S rRNA and position 2 of adenine 37 in tRNAs. m2A2503 modification seems to play a crucial role in the proofreading step occurring at the peptidyl transferase center and thus would serve to optimize ribosomal fidelity. The polypeptide is Dual-specificity RNA methyltransferase RlmN (Cupriavidus necator (strain ATCC 17699 / DSM 428 / KCTC 22496 / NCIMB 10442 / H16 / Stanier 337) (Ralstonia eutropha)).